A 316-amino-acid chain; its full sequence is protein SLOW GREEN 1, chloroplastic (316 aa).

The N-terminal 39 residues, 1–39 (MISSLSASSSLVSSFVAVKATPVTGPLIPRRDLLSIRIR), are a transit peptide targeting the chloroplast. 4 TPR repeats span residues 118-151 (VETL…QPEE), 152-185 (TEWK…NPLS), 226-259 (RDVR…DPKD), and 261-293 (RPYF…SPKK).

As to expression, ubiquitous. Preferentially expressed in newly formed green tissues.

Its subcellular location is the plastid. It is found in the chloroplast. Functionally, required for the early stage of chloroplast development. May be involved in chloroplast protein biosynthesis and/or degradation. The chain is protein SLOW GREEN 1, chloroplastic from Arabidopsis thaliana (Mouse-ear cress).